Here is a 288-residue protein sequence, read N- to C-terminus: Homoserine kinase (288 aa).

79-89 (PPARGLGSSSA) contributes to the ATP binding site.

This sequence belongs to the GHMP kinase family. Homoserine kinase subfamily.

Its subcellular location is the cytoplasm. The enzyme catalyses L-homoserine + ATP = O-phospho-L-homoserine + ADP + H(+). It functions in the pathway amino-acid biosynthesis; L-threonine biosynthesis; L-threonine from L-aspartate: step 4/5. Its function is as follows. Catalyzes the ATP-dependent phosphorylation of L-homoserine to L-homoserine phosphate. The sequence is that of Homoserine kinase from Listeria monocytogenes serotype 4b (strain CLIP80459).